The chain runs to 96 residues: Putative pterin-4-alpha-carbinolamine dehydratase (96 aa).

This sequence belongs to the pterin-4-alpha-carbinolamine dehydratase family.

The catalysed reaction is (4aS,6R)-4a-hydroxy-L-erythro-5,6,7,8-tetrahydrobiopterin = (6R)-L-erythro-6,7-dihydrobiopterin + H2O. The chain is Putative pterin-4-alpha-carbinolamine dehydratase from Synechocystis sp. (strain ATCC 27184 / PCC 6803 / Kazusa).